Here is a 177-residue protein sequence, read N- to C-terminus: 2''-aminoglycoside nucleotidyltransferase (177 aa).

3 residues coordinate Mg(2+): Asp44, Asp46, and Asp86. The active-site Proton acceptor is the Asp86.

Requires Mg(2+) as cofactor.

It carries out the reaction nucleoside triphosphate + gentamicin = diphosphate + 2''-nucleotidylgentamicin.. In terms of biological role, mediates bacterial resistance to kanamycin, gentamicin, dibekacin, sisomicin, neomycin and tobramycin by adenylating the 2''-hydroxyl group of these antibiotics. This Klebsiella pneumoniae protein is 2''-aminoglycoside nucleotidyltransferase (aadB).